The chain runs to 239 residues: MGASIDDYSLVHKNILHSEDLLKYILETSAYPREHEQLKGLREVTEKHEWSSALVPADEGLFLSMLLKLMNAKRTIEIGVYTGYSLLTTALALPEDGKITAIDVNKSFFEIGLPFIQKAGVEHKINFIESEALPVLDQMLQETKEEDLYDYAFVDADKSNYANYHERLVKLVRIGGAILYDNTLWYGSVAYPEYPGLHPEEEVARLSFRNLNTFLAADPRVEISQVSIGDGVTICRRLY.

Residues V55, E77, G79–V80, S85, D103, and A132 each bind S-adenosyl-L-methionine. D155 is a binding site for a divalent metal cation. D157 provides a ligand contact to S-adenosyl-L-methionine. A divalent metal cation-binding residues include D181 and N182.

Belongs to the class I-like SAM-binding methyltransferase superfamily. Cation-dependent O-methyltransferase family. Requires Mg(2+) as cofactor.

The enzyme catalyses norbelladine + S-adenosyl-L-methionine = 4'-O-methylnorbelladine + S-adenosyl-L-homocysteine + H(+). Its pathway is alkaloid biosynthesis. Its function is as follows. 4'-O-methyltransferase converting norbelladine to 4'-O-methylnorbelladine. 4'-O-methylnorbelladine is a precursor to all Amaryllidaceae alkaloids such as galanthamine, lycorine and haemanthamine, and including haemanthamine- and crinamine-type alkaloids, promising anticancer agents. The chain is Norbelladine 4'-O-methyltransferase 2 from Narcissus aff. pseudonarcissus MK-2014 (Daffodil).